Consider the following 411-residue polypeptide: F-box/kelch-repeat protein At3g61590 (411 aa).

In terms of domain architecture, F-box spans 37 to 83; the sequence is FSMDSLLPDDLLERILSFLPIASIFRAGTVCKRWNEIVSSRRFLCNF. Kelch repeat units lie at residues 81–135, 137–178, 196–246, 251–299, 302–350, and 352–401; these read CNFS…SSCG, VCFM…MSTS, SIVK…ICNN, MIYS…LMNL, RLVI…EFDE, and FASS…FTGF.

Part of a SCF (ASK-cullin-F-box) protein ligase complex. Interacts with SKP1A/ASK1, SKP1B/ASK2, ASK3, ASK9, ASK11, ASK12, ASK13, ASK14, ASK16 and ASK18.

The protein operates within protein modification; protein ubiquitination. Its function is as follows. Component of SCF(ASK-cullin-F-box) E3 ubiquitin ligase complexes, which may mediate the ubiquitination and subsequent proteasomal degradation of target proteins. The chain is F-box/kelch-repeat protein At3g61590 from Arabidopsis thaliana (Mouse-ear cress).